Reading from the N-terminus, the 388-residue chain is Zinc finger CCCH domain-containing protein 47 (388 aa).

Disordered regions lie at residues 1–130 (MADP…MAPL) and 144–282 (PLHE…TPSA). Composition is skewed to basic and acidic residues over residues 61–109 (AAND…KSEV) and 181–193 (PDNHDHDPRHLPR). Residues 260–274 (ASSSSSSSSAGQQGS) are compositionally biased toward low complexity. 2 consecutive C3H1-type zinc fingers follow at residues 321–348 (HHKIALCSKWRKGRCHNGAACRYSHGEE) and 359–388 (GGGGRPCPELAAAKGWCRYGLNCKYCHGGV).

The protein is Zinc finger CCCH domain-containing protein 47 of Oryza sativa subsp. japonica (Rice).